We begin with the raw amino-acid sequence, 294 residues long: Keratin-like protein KRT222 (294 aa).

The 150-residue stretch at 1 to 150 (MELSQLLNEI…RLLEQEEIRY (150 aa)) folds into the IF rod domain. Positions 1 to 151 (MELSQLLNEI…LLEQEEIRYY (151 aa)) form a coiled coil.

The protein belongs to the intermediate filament family.

This Mus musculus (Mouse) protein is Keratin-like protein KRT222 (Krt222).